The primary structure comprises 198 residues: MQLQINVASHPLIQHWSGILENNNNPGTILRTACSELGKWITYEIMREWLVTETVSIKDNTTISLISNHYKYIIVIIMPYGFILAEGARALLPTANIALVSYNNSIDNISDKLDSFTKILVLDLFLDEIIMTSVLEELIKKGAILNNIKIACLECGSSQLNKLGQKWSTLEIYTTKVNSITDNSEATKEQVLKDKFFA.

It belongs to the UPRTase family.

It localises to the plastid. The protein resides in the chloroplast. The protein is Uracil phosphoribosyltransferase homolog of Porphyra purpurea (Red seaweed).